The following is an 853-amino-acid chain: Aryl hydrocarbon receptor (853 aa).

Positions 1-9 (MSSGANITY) are excised as a propeptide. The interval 1–38 (MSSGANITYASRKRRKPVQKTVKPVPAEGIKSNPSKRH) is disordered. Short sequence motifs (nuclear localization signal) lie at residues 12-15 (RKRR) and 36-41 (KRHRDR). In terms of domain architecture, bHLH spans 26–79 (PAEGIKSNPSKRHRDRLNTELDRLASLLPFPQDVINKLDKLSVLRLSVSYLRAK). The tract at residues 37–65 (RHRDRLNTELDRLASLLPFPQDVINKLDK) is DNA-binding. Required for maintaining the overall integrity of the AHR:ARNT heterodimer and its transcriptional activity stretches follow at residues 49 to 81 (LASL…AKSF), 116 to 124 (LLQALNGFV), and 264 to 266 (FAI). Positions 63–71 (LDKLSVLRL) match the Nuclear export signal motif. The region spanning 116–179 (LLQALNGFVL…RQLHWALNPS (64 aa)) is the PAS 1 domain. Residues 273 to 340 (PSILEIRTKN…CAESHIRMIK (68 aa)) form the PAS 2 domain. A PAC domain is found at 346 to 384 (MTVFRLLAKHSRWRWVQSNARLIYRNGRPDYIIATQRPL). The segment at 429–451 (TKSNTSRKDWAPQSTPSKDSFHP) is disordered. Residues 440 to 451 (PQSTPSKDSFHP) are compositionally biased toward polar residues.

In terms of assembly, homodimer. Heterodimer; efficient DNA binding requires dimerization with another bHLH protein. Interacts with ARNT; the heterodimer ARNT:AHR binds to core DNA sequence 5'-TGCGTG-3' within the dioxin response element (DRE) of target gene promoters and activates their transcription. Binds MYBBP1A. Interacts with coactivators including SRC-1, RIP140 and NOCA7, and with the corepressor SMRT. Interacts with NEDD8 and IVNS1ABP. Interacts with BMAL1. Interacts with HSP90AB1. Interacts with TIPARP; leading to mono-ADP-ribosylation of AHR and subsequent inhibition of AHR. In terms of processing, mono-ADP-ribosylated, leading to inhibit transcription activator activity of AHR. In terms of tissue distribution, expressed in all tissues tested including brain, heart, kidney, liver, lung, spleen, skeletal muscle and thymus.

The protein resides in the cytoplasm. It localises to the nucleus. Ligand-activated transcription factor that enables cells to adapt to changing conditions by sensing compounds from the environment, diet, microbiome and cellular metabolism, and which plays important roles in development, immunity and cancer. Upon ligand binding, translocates into the nucleus, where it heterodimerizes with ARNT and induces transcription by binding to xenobiotic response elements (XRE). Regulates a variety of biological processes, including angiogenesis, hematopoiesis, drug and lipid metabolism, cell motility and immune modulation. Xenobiotics can act as ligands: upon xenobiotic-binding, activates the expression of multiple phase I and II xenobiotic chemical metabolizing enzyme genes (such as the CYP1A1 gene). Mediates biochemical and toxic effects of halogenated aromatic hydrocarbons. Next to xenobiotics, natural ligands derived from plants, microbiota, and endogenous metabolism are potent AHR agonists. Tryptophan (Trp) derivatives constitute an important class of endogenous AHR ligands. Acts as a negative regulator of anti-tumor immunity: indoles and kynurenic acid generated by Trp catabolism act as ligand and activate AHR, thereby promoting AHR-driven cancer cell motility and suppressing adaptive immunity. Regulates the circadian clock by inhibiting the basal and circadian expression of the core circadian component PER1. Inhibits PER1 by repressing the CLOCK-BMAL1 heterodimer mediated transcriptional activation of PER1. The heterodimer ARNT:AHR binds to core DNA sequence 5'-TGCGTG-3' within the dioxin response element (DRE) of target gene promoters and activates their transcription. This Rattus norvegicus (Rat) protein is Aryl hydrocarbon receptor (Ahr).